The primary structure comprises 193 residues: Epididymal-specific lipocalin-12 (193 aa).

The first 19 residues, 1-19, serve as a signal peptide directing secretion; it reads MGPWWALWLILTLPQILES. Cys-88 and Cys-193 are oxidised to a cystine. N-linked (GlcNAc...) asparagine glycosylation is found at Asn-143 and Asn-172.

This sequence belongs to the calycin superfamily. Lipocalin family. In terms of assembly, monomer. In terms of tissue distribution, expressed in epididymis.

The protein resides in the secreted. Functionally, binds all-trans retinoic acid and may act as a retinoid carrier protein within the epididymis. May play a role in male fertility. This Mus musculus (Mouse) protein is Epididymal-specific lipocalin-12 (Lcn12).